We begin with the raw amino-acid sequence, 189 residues long: Peptidyl-tRNA hydrolase (189 aa).

A tRNA-binding site is contributed by Y14. H19 (proton acceptor) is an active-site residue. Residues Y64, N66, and N112 each coordinate tRNA.

It belongs to the PTH family. As to quaternary structure, monomer.

It localises to the cytoplasm. The enzyme catalyses an N-acyl-L-alpha-aminoacyl-tRNA + H2O = an N-acyl-L-amino acid + a tRNA + H(+). In terms of biological role, hydrolyzes ribosome-free peptidyl-tRNAs (with 1 or more amino acids incorporated), which drop off the ribosome during protein synthesis, or as a result of ribosome stalling. Its function is as follows. Catalyzes the release of premature peptidyl moieties from peptidyl-tRNA molecules trapped in stalled 50S ribosomal subunits, and thus maintains levels of free tRNAs and 50S ribosomes. The chain is Peptidyl-tRNA hydrolase from Finegoldia magna (strain ATCC 29328 / DSM 20472 / WAL 2508) (Peptostreptococcus magnus).